A 290-amino-acid chain; its full sequence is Fructose-1,6-bisphosphatase class 1 (290 aa).

Residues E78, D96, L98, and D99 each coordinate Mg(2+). Substrate is bound by residues 99 to 102, Y201, and K226; that span reads DGSS. Position 232 (E232) interacts with Mg(2+).

Belongs to the FBPase class 1 family. Homotetramer. The cofactor is Mg(2+).

The protein resides in the cytoplasm. The enzyme catalyses beta-D-fructose 1,6-bisphosphate + H2O = beta-D-fructose 6-phosphate + phosphate. The protein operates within carbohydrate biosynthesis; gluconeogenesis. The chain is Fructose-1,6-bisphosphatase class 1 from Helicobacter pylori (strain Shi470).